Here is a 367-residue protein sequence, read N- to C-terminus: Probable sugar phosphate/phosphate translocator At1g48230 (367 aa).

The next 10 helical transmembrane spans lie at 9-29, 43-63, 76-96, 106-126, 140-160, 163-183, 193-213, 229-249, 257-276, and 280-302; these read LVLT…VILY, LPIT…FLLI, FEIY…SLWF, VAFI…MAVV, MVLV…FNVI, VYQV…QVLL, VTSL…PWYV, WIFF…FLVI, IRVA…TVIF, and TITG…YNYI. Basic and acidic residues predominate over residues 321 to 330; the sequence is ITKDWKEKNS. The disordered stretch occupies residues 321-341; sequence ITKDWKEKNSSDGGSPRGLEL.

Belongs to the TPT transporter family. TPT (TC 2.A.7.9) subfamily.

The protein localises to the membrane. The protein is Probable sugar phosphate/phosphate translocator At1g48230 of Arabidopsis thaliana (Mouse-ear cress).